A 1007-amino-acid polypeptide reads, in one-letter code: A disintegrin and metalloproteinase with thrombospondin motifs 1 (1007 aa).

Positions 1 to 20 (MPCCLWAALSLLLAVVGAGA) are cleaved as a signal peptide. 2 N-linked (GlcNAc...) asparagine glycosylation sites follow: Asn130 and Asn228. The 187-residue stretch at 184–370 (LWLELAIVAD…WSSCSKEQFH (187 aa)) folds into the Peptidase M12B domain. A Zn(2+)-binding site is contributed by His322. Residues 322 to 333 (HELAHLLGLTHD) carry the Metal-binding motif. The active site involves Glu323. Positions 326 and 332 each coordinate Zn(2+). 4 disulfides stabilise this stretch: Cys338/Cys364, Cys494/Cys530, Cys498/Cys536, and Cys509/Cys520. In terms of domain architecture, TSP type-1 1 spans 482–537 (TPEWGDWEEWSACNADCGYGLRTRTRKCKYRGFVSESACEGAGSQVATCWAGSSCA). Asn561, Asn610, Asn626, Asn737, Asn777, and Asn865 each carry an N-linked (GlcNAc...) asparagine glycan. 2 consecutive TSP type-1 domains span residues 833–899 (CEFV…NRIP) and 900–952 (CPVY…RRCP). 3 disulfide bridges follow: Cys912/Cys946, Cys916/Cys951, and Cys927/Cys935.

Zn(2+) serves as cofactor.

Its subcellular location is the secreted. It localises to the extracellular space. It is found in the extracellular matrix. Involved in larval molting and metamorphosis. May degrade extracellular matrix (ECM) and basement membrane (BM) during the development of organs to allow degeneration and remodeling of tissues. This is A disintegrin and metalloproteinase with thrombospondin motifs 1 from Bombyx mori (Silk moth).